Here is a 217-residue protein sequence, read N- to C-terminus: MSHSPLSSSIADLRKSYERAELSEDASHADPLLQFDQWLREAIAAQVPEPNAMTVATVGSDLRPSTRVVLIKGYDAQGIVWYTNYDSRKGRQIAGNPYAALQFHWVELERVVRIEGVVEKVSEAESDAYFHSRPLDSRIGAWASPQSQVIPSRGMLVANAAKYGAQFLLKPPRPPHWGGFRLRPDQWEFWQGRKSRLHDRLRYRLEDGTWERERLAP.

Substrate-binding positions include 14 to 17 (RKSY) and Lys72. Residues 67–72 (RVVLIK), 82–83 (YT), Arg88, and Lys89 contribute to the FMN site. Positions 129, 133, and 137 each coordinate substrate. Residues 146–147 (QS) and Trp190 each bind FMN. 196-198 (RLH) is a binding site for substrate. Arg200 is a binding site for FMN.

This sequence belongs to the pyridoxamine 5'-phosphate oxidase family. Homodimer. It depends on FMN as a cofactor.

It catalyses the reaction pyridoxamine 5'-phosphate + O2 + H2O = pyridoxal 5'-phosphate + H2O2 + NH4(+). The catalysed reaction is pyridoxine 5'-phosphate + O2 = pyridoxal 5'-phosphate + H2O2. It participates in cofactor metabolism; pyridoxal 5'-phosphate salvage; pyridoxal 5'-phosphate from pyridoxamine 5'-phosphate: step 1/1. It functions in the pathway cofactor metabolism; pyridoxal 5'-phosphate salvage; pyridoxal 5'-phosphate from pyridoxine 5'-phosphate: step 1/1. Catalyzes the oxidation of either pyridoxine 5'-phosphate (PNP) or pyridoxamine 5'-phosphate (PMP) into pyridoxal 5'-phosphate (PLP). The chain is Pyridoxine/pyridoxamine 5'-phosphate oxidase from Acidovorax sp. (strain JS42).